The chain runs to 316 residues: Transaldolase (316 aa).

The active-site Schiff-base intermediate with substrate is the lysine 131.

Belongs to the transaldolase family. Type 1 subfamily. In terms of assembly, homodimer.

Its subcellular location is the cytoplasm. It catalyses the reaction D-sedoheptulose 7-phosphate + D-glyceraldehyde 3-phosphate = D-erythrose 4-phosphate + beta-D-fructose 6-phosphate. The protein operates within carbohydrate degradation; pentose phosphate pathway; D-glyceraldehyde 3-phosphate and beta-D-fructose 6-phosphate from D-ribose 5-phosphate and D-xylulose 5-phosphate (non-oxidative stage): step 2/3. Transaldolase is important for the balance of metabolites in the pentose-phosphate pathway. The polypeptide is Transaldolase (Chromohalobacter salexigens (strain ATCC BAA-138 / DSM 3043 / CIP 106854 / NCIMB 13768 / 1H11)).